A 459-amino-acid polypeptide reads, in one-letter code: MPTSVPRGAPFLLLPPLLMLSAVLAVPVDRAAPHQEDNQATETPDTGLYYHRYLQEVINVLETDGHFREKLQAANAEDIKSGKLSQELDFVSHNVRTKLDELKRQEVSRLRMLLKAKMDAKQEPNLQVDHMNLLKQFEHLDPQNQHTFEARDLELLIQTATRDLAQYDAAHHEEFKRYEMLKEHERRRYLESLGEEQRKEAERKLQEQQRRHREHPKVNVPGSQAQLKEVWEELDGLDPNRFNPKTFFILHDINSDGVLDEQELEALFTKELEKVYDPKNEEDDMREMEEERLRMREHVMKNVDTNQDRLVTLEEFLASTQRKEFGETAEGWKTVEMYPAYTEEELKRFEEELAAREAELNARAQRLSQETEALGRSQDRLEAQKRELQQAVLQMEQRKQQQQEQSAPPSQPDGQLQFRADTGDAPVPAPAGDQKDVPASEKKVPEQPPVLPQLDSQHL.

The N-terminal stretch at 1–25 (MPTSVPRGAPFLLLPPLLMLSAVLA) is a signal peptide. Ser85 carries the phosphoserine modification. Thr147 is subject to Phosphothreonine. A coiled-coil region spans residues 149 to 217 (EARDLELLIQ…QQRRHREHPK (69 aa)). Residues 171–217 (HHEEFKRYEMLKEHERRRYLESLGEEQRKEAERKLQEQQRRHREHPK) mediate DNA binding. Basic and acidic residues predominate over residues 192–209 (SLGEEQRKEAERKLQEQQ). The segment at 192-220 (SLGEEQRKEAERKLQEQQRRHREHPKVNV) is disordered. Positions 227–320 (LKEVWEELDG…VTLEEFLAST (94 aa)) are binds to GNAI2 and GNAI3. 2 consecutive EF-hand domains span residues 239–274 (PNRFNPKTFFILHDINSDGVLDEQELEALFTKELEK) and 291–326 (ERLRMREHVMKNVDTNQDRLVTLEEFLASTQRKEFG). Ca(2+) contacts are provided by Asp252, Asn254, Asp256, Glu263, Asp304, Asn306, Asp308, and Glu315. The short motif at 302–332 (NVDTNQDRLVTLEEFLASTQRKEFGETAEGW) is the GBA element. A coiled-coil region spans residues 340-407 (AYTEEELKRF…RKQQQQEQSA (68 aa)). Position 368 is a phosphoserine (Ser368). The disordered stretch occupies residues 393–459 (LQMEQRKQQQ…VLPQLDSQHL (67 aa)). A compositionally biased stretch (basic and acidic residues) spans 433–445 (DQKDVPASEKKVP). Ser456 is modified (phosphoserine).

It belongs to the nucleobindin family. In terms of assembly, interacts (via GBA motif) with guanine nucleotide-binding protein G(i) alpha subunits GNAI1, GNAI2 and GNAI3 with higher affinity for GNAI1 and GNAI3 than for GNAI2. Preferentially interacts with inactive rather than active GNAI3. Interaction with GNAI3 is inhibited when NUCB1 binds calcium, probably due to a conformational change which renders the GBA motif inaccessible. As to expression, minor constituent of the mineralized matrix of bone. Detected in calvaria, rib cartilage, liver, kidney, spleen, brain, lung, skeletal and heart muscle with highest expression in calvaria and approximately half the amount in kidney, liver and brain.

It localises to the golgi apparatus. It is found in the cis-Golgi network membrane. Its subcellular location is the cytoplasm. The protein localises to the secreted. Its function is as follows. Major calcium-binding protein of the Golgi which may have a role in calcium homeostasis. Acts as a non-receptor guanine nucleotide exchange factor which binds to and activates alpha subunits of guanine nucleotide-binding proteins (G proteins). This chain is Nucleobindin-1 (Nucb1), found in Rattus norvegicus (Rat).